The following is a 265-amino-acid chain: Small ribosomal subunit protein uS3 (265 aa).

One can recognise a KH type-2 domain in the interval 39–107; sequence VRDFLKKKLK…PVHVNIEEIR (69 aa). The disordered stretch occupies residues 211–265; that stretch reads NDAPVVEEPQDDRRRRPGRPEGRRREGEGRPGGNRRGGAGAGRRAAPGADAKSGE. The span at 221-239 shows a compositional bias: basic and acidic residues; it reads DDRRRRPGRPEGRRREGEG. A compositionally biased stretch (gly residues) spans 240 to 251; sequence RPGGNRRGGAGA.

The protein belongs to the universal ribosomal protein uS3 family. As to quaternary structure, part of the 30S ribosomal subunit. Forms a tight complex with proteins S10 and S14.

Functionally, binds the lower part of the 30S subunit head. Binds mRNA in the 70S ribosome, positioning it for translation. This chain is Small ribosomal subunit protein uS3, found in Cupriavidus necator (strain ATCC 17699 / DSM 428 / KCTC 22496 / NCIMB 10442 / H16 / Stanier 337) (Ralstonia eutropha).